We begin with the raw amino-acid sequence, 360 residues long: Phenylalanine--tRNA ligase alpha subunit (360 aa).

Glutamate 260 is a Mg(2+) binding site.

Belongs to the class-II aminoacyl-tRNA synthetase family. Phe-tRNA synthetase alpha subunit type 1 subfamily. Tetramer of two alpha and two beta subunits. Mg(2+) is required as a cofactor.

It localises to the cytoplasm. The enzyme catalyses tRNA(Phe) + L-phenylalanine + ATP = L-phenylalanyl-tRNA(Phe) + AMP + diphosphate + H(+). This chain is Phenylalanine--tRNA ligase alpha subunit, found in Methylobacterium sp. (strain 4-46).